Consider the following 259-residue polypeptide: Small ribosomal subunit protein uS2 (259 aa).

The disordered stretch occupies residues 232–259 (KAMEAEETKAAEKAVETEAKEETPQEAK).

Belongs to the universal ribosomal protein uS2 family.

This Maridesulfovibrio salexigens (strain ATCC 14822 / DSM 2638 / NCIMB 8403 / VKM B-1763) (Desulfovibrio salexigens) protein is Small ribosomal subunit protein uS2.